A 2845-amino-acid polypeptide reads, in one-letter code: Multiple epidermal growth factor-like domains protein 8 (2845 aa).

The signal sequence occupies residues methionine 1–alanine 27. At glycine 28–aspartate 2647 the chain is on the extracellular side. Disulfide bonds link cysteine 30–cysteine 57, cysteine 142–cysteine 152, cysteine 146–cysteine 158, cysteine 174–cysteine 184, cysteine 178–cysteine 191, and cysteine 193–cysteine 202. In terms of domain architecture, CUB 1 spans cysteine 30–serine 140. An N-linked (GlcNAc...) asparagine glycan is attached at asparagine 50. 2 EGF-like domains span residues arginine 138–aspartate 168 and glycine 170–aspartate 203. An N-linked (GlcNAc...) asparagine glycan is attached at asparagine 217. Kelch repeat units follow at residues leucine 241–tryptophan 287, serine 290–alanine 338, tryptophan 346–proline 399, alanine 402–alanine 453, tyrosine 459–serine 511, and valine 525–proline 575. 3 PSI domains span residues tyrosine 561 to glutamine 613, serine 847 to proline 899, and leucine 900 to proline 947. The N-linked (GlcNAc...) asparagine glycan is linked to asparagine 1048. Residues aspartate 1074 to asparagine 1115 form the EGF-like 3; calcium-binding domain. Intrachain disulfides connect cysteine 1078–cysteine 1091, cysteine 1085–cysteine 1100, cysteine 1102–cysteine 1114, cysteine 1163–cysteine 1171, cysteine 1165–cysteine 1179, cysteine 1182–cysteine 1191, cysteine 1194–cysteine 1208, cysteine 1211–cysteine 1224, cysteine 1213–cysteine 1231, cysteine 1233–cysteine 1242, cysteine 1245–cysteine 1259, cysteine 1263–cysteine 1302, cysteine 1336–cysteine 1367, cysteine 1407–cysteine 1421, cysteine 1415–cysteine 1433, and cysteine 1435–cysteine 1444. Laminin EGF-like domains are found at residues cysteine 1163–proline 1210 and cysteine 1211–arginine 1261. The CUB 2 domain maps to cysteine 1263 to alanine 1405. Residue asparagine 1271 is glycosylated (N-linked (GlcNAc...) asparagine). A Phosphothreonine modification is found at threonine 1353. One can recognise an EGF-like 4 domain in the interval glycine 1403 to arginine 1445. Kelch repeat units lie at residues threonine 1522–alanine 1570, alanine 1580–threonine 1626, serine 1632–tyrosine 1679, serine 1685–serine 1735, threonine 1796–alanine 1843, and arginine 1852–alanine 1898. Residues arginine 1726–glutamate 1745 are disordered. PSI domains are found at residues proline 1876–serine 1916, glutamate 1924–arginine 1979, proline 2060–serine 2118, and glycine 2120–proline 2177. The N-linked (GlcNAc...) asparagine glycan is linked to asparagine 2066. In terms of domain architecture, EGF-like 5 spans proline 2178–threonine 2216. Cystine bridges form between cysteine 2182-cysteine 2195 and cysteine 2189-cysteine 2204. Residue asparagine 2229 is glycosylated (N-linked (GlcNAc...) asparagine). 8 cysteine pairs are disulfide-bonded: cysteine 2253-cysteine 2261, cysteine 2255-cysteine 2270, cysteine 2273-cysteine 2282, cysteine 2285-cysteine 2299, cysteine 2380-cysteine 2389, cysteine 2382-cysteine 2397, cysteine 2399-cysteine 2424, and cysteine 2427-cysteine 2441. Laminin EGF-like domains lie at cysteine 2253–proline 2301 and cysteine 2380–arginine 2443. The interval threonine 2523 to proline 2564 is disordered. A compositionally biased stretch (pro residues) spans glutamine 2527–aspartate 2540. Gly residues predominate over residues glycine 2542–serine 2556. A helical transmembrane segment spans residues leucine 2648–leucine 2668. The Cytoplasmic portion of the chain corresponds to leucine 2669–leucine 2845. A compositionally biased stretch (gly residues) spans glycine 2817–arginine 2831. Positions glycine 2817–leucine 2845 are disordered. Over residues serine 2836–leucine 2845 the composition is skewed to polar residues.

The protein localises to the membrane. Its function is as follows. Acts as a negative regulator of hedgehog signaling. In Homo sapiens (Human), this protein is Multiple epidermal growth factor-like domains protein 8 (MEGF8).